We begin with the raw amino-acid sequence, 98 residues long: MKAYDIIVSPMLTEKTNTQRESINVYVFKVNKRANKKEVGAAIKELFNVTPVSCNLLNIKSKAKVVVSRKGYPIGKGKTSSWKKAYVYLKKEDKIDIF.

It belongs to the universal ribosomal protein uL23 family. Part of the 50S ribosomal subunit. Contacts protein L29, and trigger factor when it is bound to the ribosome.

In terms of biological role, one of the early assembly proteins it binds 23S rRNA. One of the proteins that surrounds the polypeptide exit tunnel on the outside of the ribosome. Forms the main docking site for trigger factor binding to the ribosome. This chain is Large ribosomal subunit protein uL23, found in Borreliella afzelii (strain PKo) (Borrelia afzelii).